The primary structure comprises 4592 residues: MVFESVVAEVIDRFLGSFLQEVGKKQLKIGVLNGNVVLKNIEVKPEAFKAFDLPLSIDRGIVGKLTIKVPWTSLKSESVVVHLQDIYILASSSSTNVSSNYSSSDDDSSYHSDDDNSSSNNNNNNNNDSSSSSSNTTSTASQLYDSSSEKFLKFLKLDKKKPKKENSNGDLKSTNTTTNNNGINNSNDKNKNNNNIDSQNDIEFDEESLNELNVEVNGKKKKDGFKEKLITKIINNLQVVIEKVHIRIEERKNNRNIAIGLCLDKLFVQSTDESWNPIFIDTMPTSTTSSNNNNNNNNNNTTSSSSSSSILNKLAKLSDLSIYINHDQEPMKNLPTKDLCQALRDSIPTSKNTLSHHMFLDPLSANLCLKLHQSAGSIQSINKIEIESIIEEIGLCLEPQQYSSLLSILENISEFVNDIKEEKTQNNKSAFESILKKNATIKLNKKDDKKDDKKDDINSSSSSIGSSNSSNNTPTKDKNKEKEKDKEKEKEKEKKKEKEKLKLEEKKKKKEEKGKSKSKDSKKNKIKGIEFEVEPQQLITKSDSSDSLQSLEKPSKELLKQQFYDTIGYVSPTSNSTTTNNSNNNSSSSPNILATSPSNNSLSPMLISKPIQPKRIEKELIMNFQIKTIHVKLLSDEPEKELNKQATLIYGDISNISFSLYKKADVMNLDSLIKSIKLSGLWVQNEQFPDMISSSTISENWLSFQMKMSPILDSSSGVGVGVGGGGSGTTSPLQTIITTNGNGSGSKKKPQSTPKNITILIDVKPMFFVLNSAAILRYLQLITPNHTIDLSGFSSGKKRPLSRNKVTLSIIAQSPTVIIPISSAENYNNQSSSSSSSSQPPPPKPTEETSTTNKPKKQQGISFSENTVAILDLGKISLEMLPSSPIGVNDGNFSPSLPIPSSSSNVEYQNFQISTMNIKSILTKPPTLTGSTTTLKFGKHHPSFKEDNKIETYCNQRTEMDKILFETSLIVHMKKRKSDQPDYENPKVIMNVNFPFVRFYFSPFSFYQIRLFVFQLMSEIQRVEEAFISSFQFKIRSNSTTSPTFNSLNNKPSTLQNNHIDIENGNSSNNNNTDSPSKSKRQWLSTSNSNLSTMVNNLTESTGIGIGKENEIIRKREIVFSSHVVFDDINIIVTNLFNLSTIDVEPILHIKSDQLVSNLKVEKSNQRDTTVIGDYAFNDCNIYKCTNENQRGGTNGHPSYTDDDIVISSNFNKFKSPKYFKNKRKEENEQNEGNTEDDEQEEEEQEKKPIIYGTIFHNKQLVPTYEKLSDIKINLSTSYCNLIPQITGNIIEIIQMIVVVNRKVTQSVQRQLEEQRMRRPPSRFTVNKVLIYISVKGIKSILMLPKLINTTTNTVATQQNNQQYKEEIISRFDMKEVDLEITKLPNRLILDFFVDGFELYDLVNDFNTNLYNKVLSNYDDSNLLLTFKYERISKIALPLVLLDADINRFQISLLPNFLNVLKDFILDLFQFIPGLIKQQKKTNKELTTTTTINDGSNMEKYKKKKGIKINARMEAPLLIIPENQLSRNQFIIDLGLLKINNEFISNQTLSLFHFNLSNVNLKTIQFNNNRFKENLVLNNLRLNVEMTSILVWKDNQNGIGVLPPPRLVLDVNLCDVVFKINQNDIMFLMDRVSNLMLIINSTKSEFLNLKIKQEQQQEQEQQQDEELQKSINSKPPSPKLSLMSPLRKSTTSPFKKFIPSSQQQQQQQQQQQQQQSNSNLNRLVNKLPNQQINQVEEILPIEEAPINKLNYGGSNGRMKLKLNLKIDSVRFYIEEIGSLFYIKDTKFKSDIGFDGYKQSIISIGKIYLFFNQLHQLSFTIPIDKIIQDPNQYEQILSLKDNSVINTLEVNFSTLSNNNNDNNNDNNNSNNSNNNNNTSNGSGNSLFKRMPIQSKENIHPFDSELNLTLRQFQITVSLNFISSILEFATPVIQKVLEFKKNKTATSTPNNNEINSLSNSSIISDMTPLSLSTSSLDNTSISTTTTTTTTTTTTTTTTTTTTSTAKIPTISIGSNRRLKKQNSIVMPLINDNSNKSPTSKSSSSKSSSSKSSKKEQQQEKKSIKVKLVINVESPQIVLMLNEDDAILIDLGKIHIENLFYFKTIKGIDLNYESMEIQLSNLFVEIFQSSSYVGSSFEEFNQNLPDGCGDDSYRNKCHLLEDVSLVVNIDIVDDFQSYSKICSTSNHYNNNNAPLPIQKVNIHCKSVSFNISHQGYQLLLNILINYMNCYKNSLEPILLLKKNFNNNNNNNNNNNNNNNNNNNNNNNNTNIINNSSKKKKKQILIDENGKEIDIKTEITVQLSELRFLMLLNHGMDKVRDQLATLQINDLGANIISIGNKSTSIKCFLRSIRLSDSRVDSGSKFIDLFCSKNITTFQGPLKDSLTNINISGSFNNSSNQEEPLITASIDIDKQLNKLTLDVKIEKPRLHISPTIVFMMVGFFLEPYSKVKLEIKQLFSKTNNNNNNNNNNYNNTNSNNNNNQEEEEKDSISTKKKKIISLKTNIKKLKILLVENPNSEVSNLVIVKMSIDASFDETMNGSSRIIGGSIKNFQMFSFRHSIANVSSSRAASLIDPVTFDFGCNLLLIKSTCPSIEKSNLLIDVNANIDQFNLFLSYHDILLIALIIGQLKKEFPKLSKSSKKSTTTTTTLTQKKLKNEKMINNVLTVKFNSPQFGLTLVNDYMDQNLPLIDLSFYRLDLLIQGTIGDEIKVTVDSKIVMDYFNINKMAFEPLIENWDIQLQMIKLNNQNSPNKPATSIQLSSNQFLNINASYGFAHSLLSTYHSIQYDLSTTLPIIMGLFKTKPEFSTFQLSSSPSLSSTQQPTRVFSPPTISTNLVGGGGSGGFKKSNSSSPLIRSSTIDSLNLAVSTSNNPNGSGYNNSNNNNGGGLSPDIILPISSTNRIRSGSLSQNPLGSVSTLVTSPNLTSNRLGFNTSPLLSQQQLKQQQQQQQLFNNSTLLRPIIQPLPATVRSSPLLQTISIRKLTSSFHPYWIINKTGVNLEYTVRVLSGEQKGKKKSTSTSTSPTLSSQPSSSSSSSSQYTHASFFLENEQKQPISIENSKSLLTAKKTRDFRGFKDESLDQGPHITIKLSNHNKNVKNFVNNSVVNSNSSGYNSSSPSPSSSSSPSSSSSNPIPIGRVGYRLIQVGGKKLIFEVGWNEDGSKVITVRSNVLLKNTTTMNLEVKLINNQINTSNGGSLSSNNNNTPKEIKKILFPNEELPVPLQYINSGKYLSILPIGDSGEEFKHSNPFNDLIALDDNDIHSLYKILTCPKIIPKSPQIHMKNNNNSNGNNNNITPPTYNNVKLILLNSNYEKCVINSTDNSSVNDEINTEQTLANLLPNEINLRNDKSKLLRSTISKLPTSPQTSSSSSPPPATTTTSTTTKRTTINSTMSSFNNIYSQNIIKILSPLVIENLLPCKIELTLYEGDIPLESSTLESCQSVPFYTQDPRSSLYVKISGIPGFVDQKHLIVDCDRNNGSNGNKPIIKSKIKLEDPNKILKPLNIMISNREDQVEGVRKLALYSVYWIINKTGLPMIFEKPNFIPMLFADKESKIPQMIAKSKNSLKIEQGRKSKKQQQQHRHNHCTIDTMILYSSDLLYIKVPNSDWSNVFSLETVGTDGIIHCFSNTNSNNSTNHHQDPFYSSTFNNSSNDNINNGNSNNNTSNSLSPPSSSSSINLSKLKSNSDNREYNFRASISMGKNKLQRTKMVTINFQYIFINKSSRRMLYRQIGQSYRIESIEPGESKPFHWPNRHGEKLIQIKFDDDYYDWSGSFTIDDLAELTVKQRSLNLMEVPKPYLGRVDIKDNDTHTSIHFYDQDTEYSPFRIENQIPRSIKFYQIGTSIIDILPPYQSIDYIWDELLGTKILRLEISSTTTTTTTTTTNSTNDINNDNNNNNNQYIENHSTFESSYSSSSVILDCNIMKIKNFKPIKIGTNTIYSFMKVDGPTRVLVLSYDQPKDDSSSELSQTVENCKLDLQLSLPRIGVSLIDHNSKELIYLSLNDISLSFSLSNIFSRFELIVTNMQIDNQLMNTDYPVLFYHTNNSNNEEQDPKPFLHFSFIKNEEKKGLKYFELLSLLIQEVNLMLDDSILASIIETITKIKQLDKNFKKHKKNQQLQQNPQQQQPQQQNNEIQNNPINSPFILNDEKSKIQLLNDIEPISSDPLLLPTSNSAISSNNNNNNNNLTKKKKKKSMIYIKLLLLNPIKVILSFSFVRDGFVGHSNSDFVGILLEVVGVSFGLDRTPLCLNALILEHPFLSERLFASRIKSHYTMQSLNQLYKVIGSSDNIGNPVGLFNHIGTGVKDFFYEPALGLITSPKDFGKGLAKGSISLVKNSVYGLFNTLSKLSNTVGKGVAILSFDDQYLRNRQRSRQKKAKHLGEGVVYGFKSLGKGVIDGVTGVVTKPIEGAIKGSIEGFAKGMAQGVVGVAVKPVVGVFDLVTMTTEGIRNTTNLFKDTTRMRPPRCFGTDNLLVEYNFEQSEGHYILETTFKGRFKNSDTYIIHFNNGGVKNYITLITNLRILLVKQIKNSYSFRWSSTFENIKSCEITPDGLLLHFEHLQRIKSVDYRSQHCIHITDPDQLSQLYLIIKEQILKIKK.

One can recognise a Chorein N-terminal domain in the interval F3–S102. 13 disordered regions span residues T95–Q142, L157–Q199, S286–S307, K445–I529, S574–M605, N826–I861, T1040–W1083, Y1219–P1249, Q1655–N1717, S1855–F1886, T1971–S2001, P2025–Q2056, and N2245–N2270. Low complexity-rich tracts occupy residues S117–T139 and K172–Q199. Positions K437–K517 form a coiled coil. Residues K445 to I457 are compositionally biased toward basic and acidic residues. Residues N458–P474 show a composition bias toward low complexity. The segment covering T475–I529 has biased composition (basic and acidic residues). The segment covering S574 to N591 has biased composition (low complexity). A compositionally biased stretch (polar residues) spans I592–S603. The segment covering N829 to S838 has biased composition (low complexity). Over residues T1040–H1059 the composition is skewed to polar residues. The span at N1064 to P1076 shows a compositional bias: low complexity. The span at N1234–E1244 shows a compositional bias: acidic residues. Composition is skewed to low complexity over residues K1669–S1689 and Q1702–Q1715. Residues S2037 to K2048 show a composition bias toward low complexity. Residues T2321 to R2354 form a TPR 1 repeat. 7 disordered regions span residues K2456–T2489, A2862–G2882, G3006–S3035, N3106–N3129, K3356–T3384, N3560–N3580, and S3630–K3679. Composition is skewed to low complexity over residues N2458–N2478, S2864–N2880, and T3015–S3035. Positions P3358–T3384 are enriched in low complexity. The span at K3569–N3580 shows a compositional bias: basic residues. Positions S3640–K3679 are enriched in low complexity. A TPR 2 repeat occupies E3789–R3822. 2 stretches are compositionally biased toward low complexity: residues T3872–N3894 and Q4111–N4135. Disordered stretches follow at residues T3872 to I3897 and K4105 to N4135.

The protein localises to the membrane. Its function is as follows. Mediates the transfer of lipids between membranes at organelle contact sites. In Dictyostelium discoideum (Social amoeba), this protein is Intermembrane lipid transfer protein vps13D (vps13D).